The following is a 182-amino-acid chain: UPF0316 protein Sde_0566 (182 aa).

The next 3 membrane-spanning stretches (helical) occupy residues 7-27, 41-61, and 67-87; these read VAPELLALLIFVSRVIDVSLG, LAAFIGFFEIMIWLVAAGQVF, and WYLALAYAGGFSMGNYVGMWI.

This sequence belongs to the UPF0316 family.

It localises to the cell membrane. This chain is UPF0316 protein Sde_0566, found in Saccharophagus degradans (strain 2-40 / ATCC 43961 / DSM 17024).